A 788-amino-acid polypeptide reads, in one-letter code: MDPEFGRGMAPRKREPWRTTLLLAYQSLGVVYGDLSISPLYVYKSTFAEDITHSESNEEIFGVLSFVFWTLTLIPLIKYVSIVLRADDNGEGGTFALYSLICRHANVSLLPNRQVADEELSTYKLEYPPEVANRSRIKEWLEKHKTLQTALLIMVMIGTCMVIGDGVLTPAISVFSAVSGLELSLSRDQHEYAVIPITCVILVFLFALQHYGTHRVGFLFAPIVLAWLICMSMLGLYNIIHWNPQVYRALNPYYMLKFLRKTKKSGWMSLGGILLCMTGSEAMFADLGHFSYSAIQLAFTTLVYPALILGYMGQAAYLSKHHTLNSTYQIGYYISVPESVRWPVLVLAILASVVGSQAIISGTFSIINQSQSLSCFPRVKVVHTSENIHGQIYIPEINWLLMVLCIAVTVGFRDTKHMGNASGLAVITVMLVTTCLTSLVIMLCWHRSPALALVFFLFFGSIEVLYFSASLIKFREGAWLPIMLALILMAVMFIWHHTTIKKYEFDLHNKVTLEWLLALGDKLGMVRVPGIGLVYTDLTSGVPANFSRFVTNLPAFHRVLVFVCVKSVPVPHVLPAERYLVGRVGPAGHRSYRCIVRYGYRDVHQDVDSFEAELVESLATFIKLDALYHRCSDAGSGSEQLDDGRYERENALTVIGTNPLRRCLSYEASHDGVSSVDAARSPNGIVEVPAAAAAAPVTKKVRFVVEAASPEVEKGVVEELQELCEAREAGTAFILGHSHVQTKPGSSLLKKLAVGVGYNFLRRNCRGPDVVLRVPPASLLEVGMVYVL.

At 1-21 the chain is on the cytoplasmic side; sequence MDPEFGRGMAPRKREPWRTTL. The helical transmembrane segment at 22-42 threads the bilayer; that stretch reads LLAYQSLGVVYGDLSISPLYV. Over 43–59 the chain is Extracellular; that stretch reads YKSTFAEDITHSESNEE. Residues 60 to 80 traverse the membrane as a helical segment; it reads IFGVLSFVFWTLTLIPLIKYV. Over 81-151 the chain is Cytoplasmic; the sequence is SIVLRADDNG…EKHKTLQTAL (71 aa). The chain crosses the membrane as a helical span at residues 152–172; the sequence is LIMVMIGTCMVIGDGVLTPAI. The Extracellular portion of the chain corresponds to 173–191; it reads SVFSAVSGLELSLSRDQHE. The helical transmembrane segment at 192-212 threads the bilayer; the sequence is YAVIPITCVILVFLFALQHYG. Residues 213 to 215 lie on the Cytoplasmic side of the membrane; sequence THR. Residues 216 to 236 form a helical membrane-spanning segment; the sequence is VGFLFAPIVLAWLICMSMLGL. The Extracellular segment spans residues 237-264; the sequence is YNIIHWNPQVYRALNPYYMLKFLRKTKK. A helical membrane pass occupies residues 265-285; that stretch reads SGWMSLGGILLCMTGSEAMFA. At 286 to 292 the chain is on the cytoplasmic side; that stretch reads DLGHFSY. A helical transmembrane segment spans residues 293–313; sequence SAIQLAFTTLVYPALILGYMG. Over 314 to 343 the chain is Extracellular; it reads QAAYLSKHHTLNSTYQIGYYISVPESVRWP. A glycan (N-linked (GlcNAc...) asparagine) is linked at asparagine 325. A helical transmembrane segment spans residues 344–364; the sequence is VLVLAILASVVGSQAIISGTF. At 365 to 391 the chain is on the cytoplasmic side; the sequence is SIINQSQSLSCFPRVKVVHTSENIHGQ. Residues 392–412 form a helical membrane-spanning segment; it reads IYIPEINWLLMVLCIAVTVGF. At 413-422 the chain is on the extracellular side; that stretch reads RDTKHMGNAS. Asparagine 420 carries N-linked (GlcNAc...) asparagine glycosylation. The chain crosses the membrane as a helical span at residues 423–443; it reads GLAVITVMLVTTCLTSLVIML. At 444 to 451 the chain is on the cytoplasmic side; sequence CWHRSPAL. A helical transmembrane segment spans residues 452–472; it reads ALVFFLFFGSIEVLYFSASLI. The Extracellular segment spans residues 473-476; sequence KFRE. Residues 477 to 497 form a helical membrane-spanning segment; sequence GAWLPIMLALILMAVMFIWHH. The Cytoplasmic portion of the chain corresponds to 498 to 788; it reads TTIKKYEFDL…LLEVGMVYVL (291 aa).

Belongs to the HAK/KUP transporter (TC 2.A.72.3) family.

The protein localises to the membrane. Functionally, high-affinity potassium transporter. This chain is Probable potassium transporter 9 (HAK9), found in Oryza sativa subsp. japonica (Rice).